The following is a 318-amino-acid chain: Lipid A biosynthesis acyltransferase (318 aa).

A helical transmembrane segment spans residues 27 to 47 (PQYWGIWLGIFFLLLLAFVPF). The HXXXXD motif signature appears at 145–150 (HGWAID).

The protein belongs to the LpxL/LpxM/LpxP family. LpxM subfamily.

The protein localises to the cell inner membrane. The enzyme catalyses an alpha-Kdo-(2-&gt;4)-alpha-Kdo-(2-&gt;6)-(acyl)-lipid IVA + a fatty acyl-[ACP] = an alpha-Kdo-(2-&gt;4)-alpha-Kdo-(2-&gt;6)-lipid A + holo-[ACP]. Its pathway is glycolipid biosynthesis; KDO(2)-lipid A biosynthesis; KDO(2)-lipid A from CMP-3-deoxy-D-manno-octulosonate and lipid IV(A): step 4/4. It participates in bacterial outer membrane biogenesis; lipopolysaccharide biosynthesis. Functionally, catalyzes the transfer of an acyl chain from an acyl-[acyl-carrier-protein] (ACP) to a Kdo(2)-(acyl)-lipid IV(A) to form a Kdo(2)-lipid A. This is Lipid A biosynthesis acyltransferase from Haemophilus influenzae (strain ATCC 51907 / DSM 11121 / KW20 / Rd).